The following is a 169-amino-acid chain: Disulfide bond formation protein B 1 (169 aa).

Topologically, residues M1–F13 are cytoplasmic. Residues W14–Y30 form a helical membrane-spanning segment. At L31–L48 the chain is on the periplasmic side. C40 and C43 are joined by a disulfide. A helical membrane pass occupies residues D49 to P64. Topologically, residues R65 to G71 are cytoplasmic. The helical transmembrane segment at I72–W89 threads the bilayer. Over S90–V145 the chain is Periplasmic. A disulfide bridge links C105 with C131. The helical transmembrane segment at W146–F164 threads the bilayer. The Cytoplasmic segment spans residues G165 to A169.

It belongs to the DsbB family.

The protein resides in the cell inner membrane. Functionally, required for disulfide bond formation in some periplasmic proteins. Acts by oxidizing the DsbA protein. In Pseudomonas aeruginosa (strain UCBPP-PA14), this protein is Disulfide bond formation protein B 1.